Consider the following 294-residue polypeptide: Bifunctional protein FolD (294 aa).

Residues 166–168, S191, and I232 each bind NADP(+); that span reads GRS.

Belongs to the tetrahydrofolate dehydrogenase/cyclohydrolase family. Homodimer.

It carries out the reaction (6R)-5,10-methylene-5,6,7,8-tetrahydrofolate + NADP(+) = (6R)-5,10-methenyltetrahydrofolate + NADPH. The catalysed reaction is (6R)-5,10-methenyltetrahydrofolate + H2O = (6R)-10-formyltetrahydrofolate + H(+). The protein operates within one-carbon metabolism; tetrahydrofolate interconversion. Functionally, catalyzes the oxidation of 5,10-methylenetetrahydrofolate to 5,10-methenyltetrahydrofolate and then the hydrolysis of 5,10-methenyltetrahydrofolate to 10-formyltetrahydrofolate. This Bradyrhizobium sp. (strain BTAi1 / ATCC BAA-1182) protein is Bifunctional protein FolD.